A 388-amino-acid chain; its full sequence is GTPase Obg (388 aa).

Residues 4 to 162 (SNFVDYVKIY…MTVILELKLL (159 aa)) enclose the Obg domain. Residues 18-45 (KGGRGSTHMRREKYTPNGGPDGGDGGRG) form a disordered region. Gly residues predominate over residues 36-45 (GPDGGDGGRG). The OBG-type G domain maps to 163–329 (ADVGLVGFPN…LKDILWTELN (167 aa)). GTP is bound by residues 169–176 (GFPNAGKS), 194–198 (FTTLE), 216–219 (DIPG), 283–286 (TKSD), and 310–312 (SSV). Mg(2+)-binding residues include S176 and T196. Residues 352–388 (LKDMGEDEELDYEYEDDGDGDEDDLDYEYEEEDWEDK) form a disordered region. Positions 356–388 (GEDEELDYEYEDDGDGDEDDLDYEYEEEDWEDK) are enriched in acidic residues.

Belongs to the TRAFAC class OBG-HflX-like GTPase superfamily. OBG GTPase family. As to quaternary structure, monomer. It depends on Mg(2+) as a cofactor.

It localises to the cytoplasm. Functionally, an essential GTPase which binds GTP, GDP and possibly (p)ppGpp with moderate affinity, with high nucleotide exchange rates and a fairly low GTP hydrolysis rate. Plays a role in control of the cell cycle, stress response, ribosome biogenesis and in those bacteria that undergo differentiation, in morphogenesis control. The sequence is that of GTPase Obg from Bacteroides fragilis (strain ATCC 25285 / DSM 2151 / CCUG 4856 / JCM 11019 / LMG 10263 / NCTC 9343 / Onslow / VPI 2553 / EN-2).